The following is a 270-amino-acid chain: Peflin (270 aa).

Positions Met-1–Val-97 are disordered. 5 repeat units span residues Pro-22 to Gly-30, Pro-44 to Pro-54, Gly-62 to Gly-70, Ala-72 to Gly-81, and Pro-83 to Gln-91. Residues Pro-22–Gln-91 are 5 X 9 AA approximate tandem repeat of [AP]-P-G-G-P-Y-G-G-P-P. 2 stretches are compositionally biased toward low complexity: residues Pro-26–Gln-47 and Tyr-55–Pro-66. Residues Tyr-67 to Gln-84 are compositionally biased toward gly residues. EF-hand domains follow at residues Gly-100–Ser-135, Thr-141–Leu-169, Gln-170–Asn-202, Leu-203–Met-239, and Thr-240–Leu-269. 5 residues coordinate Ca(2+): Asp-113, Asp-115, Ser-117, Tyr-119, and Glu-124. The Ca(2+) site is built by Asp-180, Asp-182, Ser-184, Ser-186, and Glu-191.

In terms of assembly, heterodimer; heterodimerizes (via the EF-hand 5) with pdcd6.

It localises to the cytoplasm. It is found in the endoplasmic reticulum. The protein localises to the membrane. Its subcellular location is the cytoplasmic vesicle. The protein resides in the COPII-coated vesicle membrane. Functionally, calcium-binding protein that acts as an adapter that bridges unrelated proteins or stabilizes weak protein-protein complexes in response to calcium. Acts as a negative regulator of ER-Golgi transport. The chain is Peflin from Danio rerio (Zebrafish).